The chain runs to 152 residues: SsrA-binding protein (152 aa).

The protein belongs to the SmpB family.

Its subcellular location is the cytoplasm. Required for rescue of stalled ribosomes mediated by trans-translation. Binds to transfer-messenger RNA (tmRNA), required for stable association of tmRNA with ribosomes. tmRNA and SmpB together mimic tRNA shape, replacing the anticodon stem-loop with SmpB. tmRNA is encoded by the ssrA gene; the 2 termini fold to resemble tRNA(Ala) and it encodes a 'tag peptide', a short internal open reading frame. During trans-translation Ala-aminoacylated tmRNA acts like a tRNA, entering the A-site of stalled ribosomes, displacing the stalled mRNA. The ribosome then switches to translate the ORF on the tmRNA; the nascent peptide is terminated with the 'tag peptide' encoded by the tmRNA and targeted for degradation. The ribosome is freed to recommence translation, which seems to be the essential function of trans-translation. This is SsrA-binding protein from Rickettsia felis (strain ATCC VR-1525 / URRWXCal2) (Rickettsia azadi).